Here is a 126-residue protein sequence, read N- to C-terminus: Holo-[acyl-carrier-protein] synthase (126 aa).

Positions 9 and 58 each coordinate Mg(2+).

This sequence belongs to the P-Pant transferase superfamily. AcpS family. Requires Mg(2+) as cofactor.

The protein resides in the cytoplasm. It carries out the reaction apo-[ACP] + CoA = holo-[ACP] + adenosine 3',5'-bisphosphate + H(+). Functionally, transfers the 4'-phosphopantetheine moiety from coenzyme A to a Ser of acyl-carrier-protein. The protein is Holo-[acyl-carrier-protein] synthase of Photobacterium profundum (strain SS9).